The primary structure comprises 234 residues: Leucyl/phenylalanyl-tRNA--protein transferase (234 aa).

Belongs to the L/F-transferase family.

The protein localises to the cytoplasm. It carries out the reaction N-terminal L-lysyl-[protein] + L-leucyl-tRNA(Leu) = N-terminal L-leucyl-L-lysyl-[protein] + tRNA(Leu) + H(+). The catalysed reaction is N-terminal L-arginyl-[protein] + L-leucyl-tRNA(Leu) = N-terminal L-leucyl-L-arginyl-[protein] + tRNA(Leu) + H(+). The enzyme catalyses L-phenylalanyl-tRNA(Phe) + an N-terminal L-alpha-aminoacyl-[protein] = an N-terminal L-phenylalanyl-L-alpha-aminoacyl-[protein] + tRNA(Phe). Functionally, functions in the N-end rule pathway of protein degradation where it conjugates Leu, Phe and, less efficiently, Met from aminoacyl-tRNAs to the N-termini of proteins containing an N-terminal arginine or lysine. This is Leucyl/phenylalanyl-tRNA--protein transferase from Hahella chejuensis (strain KCTC 2396).